The sequence spans 552 residues: Esterase E4 (552 aa).

The first 23 residues, 1 to 23 (MKNTCGILLNLFLFIGCFLTCSA), serve as a signal peptide directing secretion. N-linked (GlcNAc...) asparagine glycosylation occurs at Asn-81. Cys-89 and Cys-106 are joined by a disulfide. The active-site Acyl-ester intermediate is Ser-214. An intrachain disulfide couples Cys-266 to Cys-277. Asn-269 is a glycosylation site (N-linked (GlcNAc...) asparagine). Glu-339 serves as the catalytic Charge relay system. Residues Asn-371, Asn-404, and Asn-443 are each glycosylated (N-linked (GlcNAc...) asparagine). His-463 functions as the Charge relay system in the catalytic mechanism.

It belongs to the type-B carboxylesterase/lipase family.

It carries out the reaction a carboxylic ester + H2O = an alcohol + a carboxylate + H(+). In terms of biological role, overproduction of nonspecific esterases is a common mechanism of resistance to organophosphate insecticides. This is Esterase E4 from Myzus persicae (Green peach aphid).